Here is a 245-residue protein sequence, read N- to C-terminus: MHFAGIVAIALATGATAYDLPENLKQIYEKHKSGKCSKELQGGYDNGHSHDGKSFSYCGDIPNAIYLHSSKNGGQYADMDIDCDGANRHAGKCSNDHSGQGETRWKDEVQKLGIDDLDANIHPYVVFGNENDDGDDPEFDPRKHGMEPLSVMAVVCNKKLFYGIWGDTNGHTATGEASLSMAELCFPEEDPSGDSGHEPNDVLYIGFTGKEAVPGKSADWKADSTESFEESIKELGDKLVAGLKA.

Positions 1 to 17 (MHFAGIVAIALATGATA) are cleaved as a signal peptide.

The protein belongs to the glycosyl hydrolase 75 family.

It localises to the secreted. It catalyses the reaction Endohydrolysis of beta-(1-&gt;4)-linkages between D-glucosamine residues in a partly acetylated chitosan.. Functionally, chitosanase catalyzing the endo-type cleavage of chitosan, the deacylated form of chitin. Chitosanase may be crucial in the degradation of the deacetylated portion of chitin in the fungal cell wall. Chitoolisaccharides produced by the hydrolysis of partially N-acetylated chitosan are known to have many biological activities, including antibacterial activity, immune-enhancing effects, and elicitor activity. The protein is Endo-chitosanase (csn) of Aspergillus oryzae (strain ATCC 42149 / RIB 40) (Yellow koji mold).